The following is a 607-amino-acid chain: Heterocyst differentiation ATP-binding protein HepA (607 aa).

An ABC transmembrane type-1 domain is found at 32 to 330 (AILAVIFSFL…INGTVAFLST (299 aa)). The next 5 helical transmembrane spans lie at 33 to 53 (ILAV…IGFL), 77 to 97 (ILAA…LILL), 163 to 182 (FSGL…YFVV), 186 to 208 (ISWQ…LSTL), and 290 to 310 (IVIS…FFFV). Positions 364 to 598 (IDLVSVDFGY…RGKLWKYHQM (235 aa)) constitute an ABC transporter domain. Residue 397-404 (GASGAGKT) participates in ATP binding.

This sequence belongs to the ABC transporter superfamily.

The protein localises to the cell inner membrane. Functionally, acts early in the process of morphological differentiation of heterocysts. This is Heterocyst differentiation ATP-binding protein HepA (hepA) from Nostoc sp. (strain PCC 7120 / SAG 25.82 / UTEX 2576).